We begin with the raw amino-acid sequence, 188 residues long: Elongation factor P (188 aa).

The protein belongs to the elongation factor P family.

The protein resides in the cytoplasm. Its pathway is protein biosynthesis; polypeptide chain elongation. Involved in peptide bond synthesis. Stimulates efficient translation and peptide-bond synthesis on native or reconstituted 70S ribosomes in vitro. Probably functions indirectly by altering the affinity of the ribosome for aminoacyl-tRNA, thus increasing their reactivity as acceptors for peptidyl transferase. This chain is Elongation factor P (efp), found in Ureaplasma parvum serovar 3 (strain ATCC 700970).